The primary structure comprises 1147 residues: SR-related and CTD-associated factor 4 (1147 aa).

The CID domain maps to 1-139 (MDAVNAFNQE…PLLDMAAGTS (139 aa)). Residue Lys49 is modified to N6-acetyllysine. 4 disordered regions span residues 145-179 (AENV…AVPQ), 235-254 (KTTP…PEQK), 269-331 (DEPE…QQPA), and 424-502 (VKRH…KPET). Ser154 bears the Phosphoserine mark. Low complexity-rich tracts occupy residues 283 to 292 (TAVTTTAPAA) and 299 to 310 (TATVPAAAAPAA). Basic and acidic residues predominate over residues 424-433 (VKRHMSDNRK). Residues 434–475 (SRSRSASRSPKRRRSRSGSRSRRSRHRRSRSRSRDRRRHSPR) show a composition bias toward basic residues. The span at 477–492 (RSQERRDREKERERRQ) shows a compositional bias: basic and acidic residues. The region spanning 508–582 (TTLWVGQLDK…KSIKIAWALN (75 aa)) is the RRM domain. Disordered stretches follow at residues 629–661 (DWKG…IPKP) and 879–1147 (RPMP…EAPR). Ser656 is modified (phosphoserine). Over residues 879 to 913 (RPMPPHMMHRGPPPGPGGFAMPPPHGMKGPFPPHG) the composition is skewed to pro residues. Over residues 941–965 (QQPPQQPQQQPQPQAPQQPQQQQQQ) the composition is skewed to low complexity. Positions 966–977 (QPPPSQQPPPTQ) are enriched in pro residues. Ser1004 carries the phosphoserine modification. Residues 1009–1085 (VENDRERYGN…RGKEKPEVTD (77 aa)) show a composition bias toward basic and acidic residues.

In terms of assembly, interacts with POLR2A; via C-terminal heptapeptide repeat domain (CTD) phosphorylated at 'Ser-2' and 'Ser-5'.

The protein resides in the nucleus. In terms of biological role, anti-terminator protein required to prevent early mRNA termination during transcription. Together with SCAF8, acts by suppressing the use of early, alternative poly(A) sites, thereby preventing the accumulation of non-functional truncated proteins. Mechanistically, associates with the phosphorylated C-terminal heptapeptide repeat domain (CTD) of the largest RNA polymerase II subunit (POLR2A), and subsequently binds nascent RNA upstream of early polyadenylation sites to prevent premature mRNA transcript cleavage and polyadenylation. Independently of SCAF8, also acts as a suppressor of transcriptional readthrough. The polypeptide is SR-related and CTD-associated factor 4 (Homo sapiens (Human)).